The chain runs to 261 residues: Cytochrome c oxidase subunit 3 (261 aa).

The Mitochondrial matrix portion of the chain corresponds to 1 to 15 (MTHQTHAYHMVNPSP). The helical transmembrane segment at 16-33 (WPLTGAFSALLLTSGLVM) threads the bilayer. Over 34–38 (WFHYN) the chain is Mitochondrial intermembrane. A helical membrane pass occupies residues 39–62 (SITLLTLGLLTNILTMYQWWRDVI). The Mitochondrial matrix portion of the chain corresponds to 63 to 77 (REGTYQGHHTPIVQK). A helical membrane pass occupies residues 78–99 (GLRYGMILFIVSEVFFFAGFFW). Residues 100 to 129 (AFYHSSLVPTHDLGGCWPPTGISPLNPLEV) are Mitochondrial intermembrane-facing. A helical transmembrane segment spans residues 130–150 (PLLNTSVLLASGVSITWAHHS). Residues 151 to 156 (LMEGKR) are Mitochondrial matrix-facing. Residues 157–178 (NHMNQALLITIMLGLYFTILQA) form a helical membrane-spanning segment. The Mitochondrial intermembrane portion of the chain corresponds to 179–198 (SEYFETSFSISDGIYGSTFF). Residues 199-224 (MATGFHGLHVIIGSTFLIVCLLRQLK) traverse the membrane as a helical segment. Topologically, residues 225-232 (FHFTSKHH) are mitochondrial matrix. A helical membrane pass occupies residues 233 to 255 (FGFEAAAWYWHFVDVVWLFLYVS). Topologically, residues 256–261 (IYWWGS) are mitochondrial intermembrane.

This sequence belongs to the cytochrome c oxidase subunit 3 family. Component of the cytochrome c oxidase (complex IV, CIV), a multisubunit enzyme composed of 14 subunits. The complex is composed of a catalytic core of 3 subunits MT-CO1, MT-CO2 and MT-CO3, encoded in the mitochondrial DNA, and 11 supernumerary subunits COX4I, COX5A, COX5B, COX6A, COX6B, COX6C, COX7A, COX7B, COX7C, COX8 and NDUFA4, which are encoded in the nuclear genome. The complex exists as a monomer or a dimer and forms supercomplexes (SCs) in the inner mitochondrial membrane with NADH-ubiquinone oxidoreductase (complex I, CI) and ubiquinol-cytochrome c oxidoreductase (cytochrome b-c1 complex, complex III, CIII), resulting in different assemblies (supercomplex SCI(1)III(2)IV(1) and megacomplex MCI(2)III(2)IV(2)).

Its subcellular location is the mitochondrion inner membrane. The enzyme catalyses 4 Fe(II)-[cytochrome c] + O2 + 8 H(+)(in) = 4 Fe(III)-[cytochrome c] + 2 H2O + 4 H(+)(out). In terms of biological role, component of the cytochrome c oxidase, the last enzyme in the mitochondrial electron transport chain which drives oxidative phosphorylation. The respiratory chain contains 3 multisubunit complexes succinate dehydrogenase (complex II, CII), ubiquinol-cytochrome c oxidoreductase (cytochrome b-c1 complex, complex III, CIII) and cytochrome c oxidase (complex IV, CIV), that cooperate to transfer electrons derived from NADH and succinate to molecular oxygen, creating an electrochemical gradient over the inner membrane that drives transmembrane transport and the ATP synthase. Cytochrome c oxidase is the component of the respiratory chain that catalyzes the reduction of oxygen to water. Electrons originating from reduced cytochrome c in the intermembrane space (IMS) are transferred via the dinuclear copper A center (CU(A)) of subunit 2 and heme A of subunit 1 to the active site in subunit 1, a binuclear center (BNC) formed by heme A3 and copper B (CU(B)). The BNC reduces molecular oxygen to 2 water molecules using 4 electrons from cytochrome c in the IMS and 4 protons from the mitochondrial matrix. In Mus musculus (Mouse), this protein is Cytochrome c oxidase subunit 3 (mt-Co3).